Consider the following 1710-residue polypeptide: Protein NETWORKED 1B (1710 aa).

The region spanning 13–92 (YSWWWDSHIP…ERYDHTTVEL (80 aa)) is the NAB domain. Residues 113–159 (EDSASSSSEPRTEADTEALQKDGTKSKRSFSQMNKLDGTSDSHEADS) form a disordered region. Basic and acidic residues-rich tracts occupy residues 122–137 (PRTE…DGTK) and 150–159 (GTSDSHEADS). Coiled coils occupy residues 152–446 (SDSH…ELGA), 474–546 (QMLR…EIHC), 579–883 (VKKL…IDSL), 974–1021 (HQCG…FESL), 1095–1259 (VSSL…LQEK), and 1285–1336 (LILE…LSAY). A disordered region spans residues 1409 to 1448 (RLSRQITRSTSQKRRDRRKIENIQPDDQVTGESRQPRLRP). Positions 1559-1665 (RRLSSLRISL…VLKLEDGTKS (107 aa)) form a coiled coil.

It belongs to the NET family. In terms of tissue distribution, expressed in root meristems and at very low levels throughout mature vasculature.

Plant-specific actin binding protein. May be part of a membrane-cytoskeletal adapter complex. This chain is Protein NETWORKED 1B, found in Arabidopsis thaliana (Mouse-ear cress).